A 524-amino-acid chain; its full sequence is Cytochrome P450 monooxygenase patH (524 aa).

Over 1–4 (MEPM) the chain is Cytoplasmic. A helical transmembrane segment spans residues 5–23 (LLLILVAAVVLLFVRWAFV). At 24-524 (YGHRTSNMPK…KEVFSQFTEG (501 aa)) the chain is on the lumenal side. Asn191 carries N-linked (GlcNAc...) asparagine glycosylation. Position 442 (Cys442) interacts with heme. Asn499 carries an N-linked (GlcNAc...) asparagine glycan.

The protein belongs to the cytochrome P450 family. Requires heme as cofactor.

The protein resides in the endoplasmic reticulum membrane. It catalyses the reaction 3-methylphenol + reduced [NADPH--hemoprotein reductase] + O2 = 3-hydroxybenzyl alcohol + oxidized [NADPH--hemoprotein reductase] + H2O + H(+). It functions in the pathway mycotoxin biosynthesis; patulin biosynthesis. Its function is as follows. Cytochrome P450 monooxygenase; part of the gene cluster that mediates the biosynthesis of patulin, an acetate-derived tetraketide mycotoxin produced by several fungal species that shows antimicrobial properties against several bacteria. PatH catalyzes the conversion of m-cresol into m-hydroxybenzyl alcohol. The pathway begins with the synthesis of 6-methylsalicylic acid by the polyketide synthase (PKS) patK via condensation of acetate and malonate units. The 6-methylsalicylic acid decarboxylase patG then catalyzes the decarboxylation of 6-methylsalicylic acid to yield m-cresol (also known as 3-methylphenol). These first reactions occur in the cytosol. The intermediate m-cresol is then transported into the endoplasmic reticulum where the cytochrome P450 monooxygenase patH converts it to m-hydroxybenzyl alcohol, which is further converted to gentisyl alcohol by the cytochrome P450 monooxygenase patI. The oxidoreductases patJ and patO further convert gentisyl alcohol to isoepoxydon in the vacuole. PatN catalyzes then the transformation of isoepoxydon into phyllostine. The cluster protein patF is responsible for the conversion from phyllostine to neopatulin whereas the alcohol dehydrogenase patD converts neopatulin to E-ascladiol. The steps between isoepoxydon and E-ascladiol occur in the cytosol, and E-ascladiol is probably secreted to the extracellular space by one of the cluster-specific transporters patC or patM. Finally, the secreted patulin synthase patE catalyzes the conversion of E-ascladiol to patulin. The protein is Cytochrome P450 monooxygenase patH of Aspergillus clavatus (strain ATCC 1007 / CBS 513.65 / DSM 816 / NCTC 3887 / NRRL 1 / QM 1276 / 107).